The following is an 87-amino-acid chain: Phosphoribosyl-ATP pyrophosphatase (87 aa).

This sequence belongs to the PRA-PH family.

The protein resides in the cytoplasm. The enzyme catalyses 1-(5-phospho-beta-D-ribosyl)-ATP + H2O = 1-(5-phospho-beta-D-ribosyl)-5'-AMP + diphosphate + H(+). The protein operates within amino-acid biosynthesis; L-histidine biosynthesis; L-histidine from 5-phospho-alpha-D-ribose 1-diphosphate: step 2/9. This is Phosphoribosyl-ATP pyrophosphatase from Clavibacter sepedonicus (Clavibacter michiganensis subsp. sepedonicus).